Here is a 552-residue protein sequence, read N- to C-terminus: CTP synthase (552 aa).

The interval 1–270 (MTKYVFVTGG…DRIICEELKL (270 aa)) is amidoligase domain. Serine 13 contacts CTP. Serine 13 contributes to the UTP binding site. ATP-binding positions include 14–19 (SLGKGI) and aspartate 71. Mg(2+) contacts are provided by aspartate 71 and glutamate 144. Residues 151–153 (DIE), 191–196 (KTKPTQ), and lysine 227 contribute to the CTP site. Residues 191-196 (KTKPTQ) and lysine 227 each bind UTP. Residues 295-547 (TIGMVGKYVD…VEAAFANKQA (253 aa)) form the Glutamine amidotransferase type-1 domain. Residue glycine 356 coordinates L-glutamine. Cysteine 383 (nucleophile; for glutamine hydrolysis) is an active-site residue. L-glutamine-binding positions include 384–387 (LGMQ), glutamate 407, and arginine 473. Active-site residues include histidine 520 and glutamate 522.

The protein belongs to the CTP synthase family. As to quaternary structure, homotetramer.

The catalysed reaction is UTP + L-glutamine + ATP + H2O = CTP + L-glutamate + ADP + phosphate + 2 H(+). The enzyme catalyses L-glutamine + H2O = L-glutamate + NH4(+). It carries out the reaction UTP + NH4(+) + ATP = CTP + ADP + phosphate + 2 H(+). It functions in the pathway pyrimidine metabolism; CTP biosynthesis via de novo pathway; CTP from UDP: step 2/2. Its activity is regulated as follows. Allosterically activated by GTP, when glutamine is the substrate; GTP has no effect on the reaction when ammonia is the substrate. The allosteric effector GTP functions by stabilizing the protein conformation that binds the tetrahedral intermediate(s) formed during glutamine hydrolysis. Inhibited by the product CTP, via allosteric rather than competitive inhibition. In terms of biological role, catalyzes the ATP-dependent amination of UTP to CTP with either L-glutamine or ammonia as the source of nitrogen. Regulates intracellular CTP levels through interactions with the four ribonucleotide triphosphates. The protein is CTP synthase of Burkholderia ambifaria (strain ATCC BAA-244 / DSM 16087 / CCUG 44356 / LMG 19182 / AMMD) (Burkholderia cepacia (strain AMMD)).